A 186-amino-acid chain; its full sequence is Peptidyl-tRNA hydrolase (186 aa).

Tyr16 is a binding site for tRNA. His21 acts as the Proton acceptor in catalysis. The tRNA site is built by Tyr66, Asn68, and Asn114.

It belongs to the PTH family. In terms of assembly, monomer.

The protein localises to the cytoplasm. It carries out the reaction an N-acyl-L-alpha-aminoacyl-tRNA + H2O = an N-acyl-L-amino acid + a tRNA + H(+). Its function is as follows. Hydrolyzes ribosome-free peptidyl-tRNAs (with 1 or more amino acids incorporated), which drop off the ribosome during protein synthesis, or as a result of ribosome stalling. Functionally, catalyzes the release of premature peptidyl moieties from peptidyl-tRNA molecules trapped in stalled 50S ribosomal subunits, and thus maintains levels of free tRNAs and 50S ribosomes. This is Peptidyl-tRNA hydrolase from Ureaplasma urealyticum serovar 10 (strain ATCC 33699 / Western).